Consider the following 492-residue polypeptide: Sestrin-1 (492 aa).

Positions F71–S252 are N-terminal domain; may mediate the alkylhydroperoxide reductase activity. The active-site Cysteine sulfenic acid (-SOH) intermediate is C130. 2 positions are modified to phosphoserine: S293 and S314. The tract at residues P321–T492 is C-terminal domain; mediates TORC1 regulation. Residues T386 to T389, T398, and E463 each bind L-leucine.

It belongs to the sestrin family. As to quaternary structure, interacts with the GATOR2 complex which is composed of MIOS, SEC13, SEH1L, WDR24 and WDR59; the interaction is negatively regulated by leucine. Interacts with RRAGA, RRAGB, RRAGC and RRAGD; may function as a guanine nucleotide dissociation inhibitor for RRAGs and regulate them. Interacts with KEAP1, RBX1 and SQSTM1; in the SQSTM1-dependent autophagic degradation of KEAP1. May interact with PRDX1. As to expression, highly expressed in heart and also detected in liver and skeletal muscles (at protein level).

It is found in the nucleus. It localises to the cytoplasm. It carries out the reaction a hydroperoxide + L-cysteinyl-[protein] = S-hydroxy-L-cysteinyl-[protein] + an alcohol. In terms of biological role, functions as an intracellular leucine sensor that negatively regulates the TORC1 signaling pathway through the GATOR complex. In absence of leucine, binds the GATOR subcomplex GATOR2 and prevents TORC1 signaling. Binding of leucine to SESN2 disrupts its interaction with GATOR2 thereby activating the TORC1 signaling pathway. This stress-inducible metabolic regulator may also play a role in protection against oxidative and genotoxic stresses. May positively regulate the transcription by NFE2L2 of genes involved in the response to oxidative stress by facilitating the SQSTM1-mediated autophagic degradation of KEAP1. Moreover, may prevent the accumulation of reactive oxygen species (ROS) through the alkylhydroperoxide reductase activity born by the N-terminal domain of the protein. Was originally reported to contribute to oxidative stress resistance by reducing PRDX1. However, this could not be confirmed. The protein is Sestrin-1 of Mus musculus (Mouse).